The sequence spans 172 residues: Podoplanin (172 aa).

The N-terminal stretch at 1–22 is a signal peptide; that stretch reads MWTVPVLFWVLGSVWFWDSAQG. Residues 23 to 141 lie on the Extracellular side of the membrane; the sequence is GTIGVNEDDI…KKDGLPVVTL (119 aa). Residues Thr37, Thr51, Thr52, Thr53, and Thr56 are each glycosylated (O-linked (GalNAc...) threonine). The tract at residues 49 to 132 is disordered; sequence KITTTGATGG…AGDETQTTDK (84 aa). Residues 51 to 63 are compositionally biased toward polar residues; it reads TTTGATGGLNEST. Asn60 carries N-linked (GlcNAc...) asparagine glycosylation. 3 O-linked (GalNAc...) threonine glycosylation sites follow: Thr63, Thr71, and Thr77. Residues 72 to 81 are compositionally biased toward basic and acidic residues; sequence QRERGTKPPL. O-linked (GalNAc...) serine glycosylation is present at Ser85. O-linked (GalNAc...) threonine glycosylation occurs at Thr86. O-linked (GalNAc...) serine glycosylation is present at Ser87. Residue Thr89 is glycosylated (O-linked (GalNAc...) threonine). Ser90 carries an O-linked (GalNAc...) serine glycan. The segment covering 90-99 has biased composition (basic and acidic residues); it reads SDHDHREHES. Thr100, Thr101, Thr102, Thr107, and Thr115 each carry an O-linked (GalNAc...) threonine glycan. Residues 100–109 show a composition bias toward low complexity; sequence TTTVKVVTSH. The segment covering 110-132 has biased composition (basic and acidic residues); that stretch reads SVDKKTSHPNRDNAGDETQTTDK. A helical transmembrane segment spans residues 142 to 162; that stretch reads VGIIVGVLLAIGFVGGIFIVV. Residues 143-147 are requires for dimerization and lipidd rafts association; it reads GIIVG. Topologically, residues 163-172 are cytoplasmic; it reads MKKISGRFSP. The interval 164-165 is requires for interaction with MSN and EZR; that stretch reads KK.

The protein belongs to the podoplanin family. As to quaternary structure, homodimer. Interacts with CLEC1B; the interaction is independent of CLEC1B glycosylation and activates CLEC1B; the interaction is dependent of sialic acid on O-glycans. Interacts with CD9; this interaction is homophilic and attenuates platelet aggregation and pulmonary metastasis induced by PDPN. Interacts with LGALS8; the interaction is glycosylation-dependent; may participate in connection of the lymphatic endothelium to the surrounding extracellular matrix. Interacts with HSPA9. Interacts (via extracellular domain) with CD44; this interaction is required for PDPN-mediated directional migration and regulation of lamellipodia extension/stabilization during cell spreading and migration. Interacts (via cytoplasmic domain) with MSN and EZR; activates RHOA and promotes epithelial-mesenchymal transition. Interacts with CCL21; relocalized PDPN to the basolateral membrane. Extensively O-glycosylated. Contains sialic acid residues. O-glycosylation is necessary for platelet aggregation activity. Disialylated at Thr-52; sialic acid is critical for platelet-aggregating activity and for CLEC1B interaction. In terms of processing, phosphorylated by PKA; decreases cell migration. Post-translationally, the N-terminus is blocked. As to expression, detected at high levels in lung and brain, at lower levels in kidney, stomach, liver, spleen and esophagus, and not detected in skin and small intestine. Expressed in epithelial cells of choroid plexus, ependyma, glomerulus and alveolus, in mesothelial cells and in endothelia of lymphatic vessels. Also expressed in stromal cells of peripheral lymphoid tissue and thymic epithelial cells. Detected in carcinoma cell lines and cultured fibroblasts. Expressed at higher levels in colon carcinomas than in normal colon tissue.

It is found in the membrane. Its subcellular location is the cell projection. The protein resides in the lamellipodium membrane. The protein localises to the filopodium membrane. It localises to the microvillus membrane. It is found in the ruffle membrane. Its subcellular location is the membrane raft. The protein resides in the apical cell membrane. The protein localises to the basolateral cell membrane. It localises to the invadopodium. Mediates effects on cell migration and adhesion through its different partners. During development plays a role in blood and lymphatic vessels separation by binding CLEC1B, triggering CLEC1B activation in platelets and leading to platelet activation and/or aggregation. Interaction with CD9, on the contrary, attenuates platelet aggregation and pulmonary metastasis induced by PDPN. Mediates effects on cell migration and adhesion through its different partners. Through MSN or EZR interaction promotes epithelial-mesenchymal transition (EMT) leading to ERZ phosphorylation and triggering RHOA activation leading to cell migration increase and invasiveness. Interaction with CD44 promotes directional cell migration in epithelial and tumor cells. In lymph nodes (LNs), controls fibroblastic reticular cells (FRCs) adhesion to the extracellular matrix (ECM) and contraction of the actomyosin by maintaining ERM proteins (EZR; MSN and RDX) and MYL9 activation through association with unknown transmembrane proteins. Engagement of CLEC1B by PDPN promotes FRCs relaxation by blocking lateral membrane interactions leading to reduction of ERM proteins (EZR; MSN and RDX) and MYL9 activation. Through binding with LGALS8 may participate in connection of the lymphatic endothelium to the surrounding extracellular matrix. In keratinocytes, induces changes in cell morphology showing an elongated shape, numerous membrane protrusions, major reorganization of the actin cytoskeleton, increased motility and decreased cell adhesion. Controls invadopodia stability and maturation leading to efficient degradation of the extracellular matrix (ECM) in tumor cells through modulation of RHOC activity in order to activate ROCK1/ROCK2 and LIMK1/LIMK2 and inactivation of CFL1. Required for normal lung cell proliferation and alveolus formation at birth. Does not function as a water channel or as a regulator of aquaporin-type water channels. Does not have any effect on folic acid or amino acid transport. The sequence is that of Podoplanin from Mus musculus (Mouse).